Consider the following 366-residue polypeptide: Polyprenyl transferase ausN (366 aa).

A run of 8 helical transmembrane segments spans residues 97 to 117 (VVGI…DLLL), 121 to 141 (LLLT…NDLI), 164 to 184 (LPTA…LFLF), 215 to 235 (LILV…GVEP), 239 to 259 (ILSS…IDLV), 287 to 307 (LAYS…LLGG), 308 to 328 (LRAP…WTFL), and 346 to 366 (SCLM…AVRV).

It belongs to the UbiA prenyltransferase family. The cofactor is Mg(2+).

It localises to the membrane. The catalysed reaction is 3,5-dimethylorsellinate + (2E,6E)-farnesyl diphosphate = (3R)-3-farnesyl-6-hydroxy-2,3,5-trimethyl-4-oxocyclohexa-1,5-diene-1-carboxylate + diphosphate + H(+). It functions in the pathway secondary metabolite biosynthesis; terpenoid biosynthesis. Functionally, polyprenyl transferase; part of the gene cluster that mediates the biosynthesis of calidodehydroaustin, a fungal meroterpenoid. The first step of the pathway is the synthesis of 3,5-dimethylorsellinic acid by the polyketide synthase ausA. 3,5-dimethylorsellinic acid is then prenylated by the polyprenyl transferase ausN. Further epoxidation by the FAD-dependent monooxygenase ausM and cyclization by the probable terpene cyclase ausL lead to the formation of protoaustinoid A. Protoaustinoid A is then oxidized to spiro-lactone preaustinoid A3 by the combined action of the FAD-binding monooxygenases ausB and ausC, and the dioxygenase ausE. Acid-catalyzed keto-rearrangement and ring contraction of the tetraketide portion of preaustinoid A3 by ausJ lead to the formation of preaustinoid A4. The aldo-keto reductase ausK, with the help of ausH, is involved in the next step by transforming preaustinoid A4 into isoaustinone which is in turn hydroxylated by the P450 monooxygenase ausI to form austinolide. The cytochrome P450 monooxygenase ausG modifies austinolide to austinol. Austinol is further acetylated to austin by the O-acetyltransferase ausP, which spontaneously changes to dehydroaustin. The cytochrome P450 monooxygenase ausR then converts dehydroaustin is into 7-dehydrodehydroaustin. The hydroxylation catalyzed by ausR permits the O-acetyltransferase ausQ to add an additional acetyl group to the molecule, leading to the formation of acetoxydehydroaustin. The short chain dehydrogenase ausT catalyzes the reduction of the double bond present between carbon atoms 1 and 2 to convert 7-dehydrodehydroaustin into 1,2-dihydro-7-hydroxydehydroaustin. AusQ catalyzes not only an acetylation reaction but also the addition of the PKS ausV diketide product to 1,2-dihydro-7-hydroxydehydroaustin, forming precalidodehydroaustin. Finally, the iron/alpha-ketoglutarate-dependent dioxygenase converts precalidodehydroaustin into calidodehydroaustin. In Aspergillus calidoustus, this protein is Polyprenyl transferase ausN.